The sequence spans 248 residues: 2-C-methyl-D-erythritol 4-phosphate cytidylyltransferase (248 aa).

The protein belongs to the IspD/TarI cytidylyltransferase family. IspD subfamily.

The catalysed reaction is 2-C-methyl-D-erythritol 4-phosphate + CTP + H(+) = 4-CDP-2-C-methyl-D-erythritol + diphosphate. Its pathway is isoprenoid biosynthesis; isopentenyl diphosphate biosynthesis via DXP pathway; isopentenyl diphosphate from 1-deoxy-D-xylulose 5-phosphate: step 2/6. Functionally, catalyzes the formation of 4-diphosphocytidyl-2-C-methyl-D-erythritol from CTP and 2-C-methyl-D-erythritol 4-phosphate (MEP). This is 2-C-methyl-D-erythritol 4-phosphate cytidylyltransferase from Corynebacterium efficiens (strain DSM 44549 / YS-314 / AJ 12310 / JCM 11189 / NBRC 100395).